We begin with the raw amino-acid sequence, 217 residues long: UPF0502 protein VFMJ11_A0613 (217 aa).

Belongs to the UPF0502 family.

The polypeptide is UPF0502 protein VFMJ11_A0613 (Aliivibrio fischeri (strain MJ11) (Vibrio fischeri)).